The sequence spans 129 residues: Large ribosomal subunit protein bL17 (129 aa).

Belongs to the bacterial ribosomal protein bL17 family. As to quaternary structure, part of the 50S ribosomal subunit. Contacts protein L32.

The chain is Large ribosomal subunit protein bL17 from Stutzerimonas stutzeri (strain A1501) (Pseudomonas stutzeri).